Consider the following 947-residue polypeptide: Zinc finger protein 268 (947 aa).

The KRAB domain occupies 81 to 152 (LSFMDVFVDF…QAQVPNQTCP (72 aa)). Ser178 is subject to Phosphoserine; by TBK1. C2H2-type zinc fingers lie at residues 276-298 (FGCS…QQTH), 304-326 (YGCN…QRIH), 332-354 (HECS…QRIH), 360-382 (YECC…QKTH), 388-410 (YVCN…ERIH), 416-438 (YECN…QRTH), 444-466 (YVCS…QGIH), 472-494 (YGCI…QRSH), 500-522 (YVCN…TRTH), 528-550 (HECN…QRIH), 556-578 (YECH…QRTH), 584-606 (YECT…QRTH), 612-634 (FECS…QRTH), 640-662 (YSCN…KGVH), 668-690 (YGCS…QRSH), 696-718 (YGCS…MRTH), 724-746 (HECR…QRIH), 752-774 (YECS…QRTH), 780-802 (YGCS…MRTH), 808-830 (YECN…ERTH), 836-858 (YKCS…QRMH), 864-886 (YECS…QRTH), 892-914 (YGCN…QRTH), and 920-942 (CKCT…QRTH).

It belongs to the krueppel C2H2-type zinc-finger protein family. Interacts (via the KRAB domain) with TRIM28 (via the RBCC domain); the interaction increases ZNF268 nuclear localization activity. Isoform 2 interacts with CHUK and IKBKB; the interaction is further increased in a TNF-alpha-dependent manner. Interacts with TOLLIP; this interaction is impaired by ZNF268 phosphorylation at Ser-178. Forms a ternary complex with TBK1 and SETD4; the interaction between SETD4 and TBK1 is ZNF268-dependent and leads to TBK1 monomethylation. Phosphorylation at Ser-178 stabilizes the protein by interfering with its binding to TOLLIP, hence impairing its degradation by Tollip-mediated selective autophagy system. In terms of tissue distribution, overexpressed in ovarian cancer tissues compared to normal ovarian tissues. Isoform 1 and isoform 2 are expressed in squamous epithelium tissues. Isoform 2 is overexpressed in squamous cervical cancer (at protein level). Expressed in blood cells. Isoform 1 is expressed in pancreas, lung, skeletal muscle, heart, placenta, liver, kidney and brain. Isoform 2 expressed in chronic lymphocytic leukemia (CLL) and several tumor cell lines. Isoform 3 is expressed in several tumor cells. Isoform 5 is expressed in fetal liver and several tumor cells. Isoform 6 is weakly expressed in brain, lung amd small intestin and in several tumor cells. Isoform 7 is expressed in fetal liver and several tumor cells.

The protein localises to the nucleus. The protein resides in the cytoplasm. Functionally, acts as a transcriptional repressor. Inhibits erythroid differentiation and tumor cell proliferation. Plays a role during ovarian cancer development and progression. Contributes to cervical carcinogenesis in part through the TNF-alpha-induced NF-kappa-B signaling pathway by interacting with the I-kappa-B-kinase (IKK) core complex. Its function is as follows. Involved in the regulation of antiviral interferon signaling. During viral infection, recruits SETD4 to TBK1, leading to TBK1 monomethylation, which is critical for the assembly of TBK1 complex and IRF3 signaling. In Homo sapiens (Human), this protein is Zinc finger protein 268 (ZNF268).